A 237-amino-acid polypeptide reads, in one-letter code: 7-cyano-7-deazaguanine synthase (237 aa).

14–24 (FSGGQDSATCL) lines the ATP pocket. The Zn(2+) site is built by cysteine 202, cysteine 217, cysteine 220, and cysteine 223.

Belongs to the QueC family. The cofactor is Zn(2+).

It carries out the reaction 7-carboxy-7-deazaguanine + NH4(+) + ATP = 7-cyano-7-deazaguanine + ADP + phosphate + H2O + H(+). It functions in the pathway purine metabolism; 7-cyano-7-deazaguanine biosynthesis. Functionally, catalyzes the ATP-dependent conversion of 7-carboxy-7-deazaguanine (CDG) to 7-cyano-7-deazaguanine (preQ(0)). In Rhodopseudomonas palustris (strain ATCC BAA-98 / CGA009), this protein is 7-cyano-7-deazaguanine synthase.